A 216-amino-acid polypeptide reads, in one-letter code: MEFTDLLPCTVVERVNRFLVNVKLNDKIVEAHLHDPGRLKEIIYTGNKVLVRRKSGKKTGYRITFGLREDQYILIDSGLHSQIASHFVSQECKPEVKIDDRRLDFACNDIFIEVKGCTLSIDGVAIFPDAPTLRGYEHLRLLERLAQEGKGAYVLFLIFSDATSFRPNSETDPRFSDEFYKALKNGVKFSFKRFSFDGKYLKYSGDILTFDGDDKS.

It belongs to the SfsA family.

The polypeptide is Sugar fermentation stimulation protein homolog (Thermoplasma volcanium (strain ATCC 51530 / DSM 4299 / JCM 9571 / NBRC 15438 / GSS1)).